Here is a 981-residue protein sequence, read N- to C-terminus: Rab3 GTPase-activating protein catalytic subunit (981 aa).

6 positions are modified to phosphoserine: S83, S379, S536, S579, S581, and S590. Positions 532-558 (GKKTSLSDSTTSAYPGDAGKTGGQLGL) are disordered. Residues 591 to 614 (DTEDLKGNGQESGKKGGPKEMANL) form a disordered region. Position 664 is a phosphoserine (S664).

The protein belongs to the Rab3-GAP catalytic subunit family. As to quaternary structure, the Rab3 GTPase-activating complex is a heterodimer composed of Rab3gap1 and Rab3gap2. The Rab3 GTPase-activating complex interacts with DMXL2. Interacts with LMAN1. In the eye, it is highly expressed within the lens, particularly in the anterior lens epithelium and in a ring corresponding to the equatorial region where anterior cells are differentiating into lens fibers. Also highly expressed in the retina.

The protein resides in the cytoplasm. It is found in the endoplasmic reticulum. The protein localises to the golgi apparatus. Its subcellular location is the cis-Golgi network. Catalytic subunit of the Rab3 GTPase-activating (Rab3GAP) complex composed of RAB3GAP1 and RAB3GAP2, which has GTPase-activating protein (GAP) activity towards various Rab3 subfamily members (RAB3A, RAB3B, RAB3C and RAB3D), RAB5A and RAB43, and guanine nucleotide exchange factor (GEF) activity towards RAB18. As part of the Rab3GAP complex, acts as a GAP for Rab3 proteins by converting active RAB3-GTP to the inactive form RAB3-GDP. Rab3 proteins are involved in regulated exocytosis of neurotransmitters and hormones. The Rab3GAP complex, acts as a GEF for RAB18 by promoting the conversion of inactive RAB18-GDP to the active form RAB18-GTP. Recruits and stabilizes RAB18 at the cis-Golgi membrane where RAB18 is most likely activated. Also involved in RAB18 recruitment at the endoplasmic reticulum (ER) membrane where it maintains proper ER structure. Required for normal eye and brain development. May participate in neurodevelopmental processes such as proliferation, migration and differentiation before synapse formation, and non-synaptic vesicular release of neurotransmitters. The sequence is that of Rab3 GTPase-activating protein catalytic subunit from Mus musculus (Mouse).